We begin with the raw amino-acid sequence, 210 residues long: 7-carboxy-7-deazaguanine synthase (210 aa).

Residues 12–14 (LQG) and arginine 27 each bind substrate. Residues 18–210 (NAGRPAVFCR…MQTHKYLNIP (193 aa)) form the Radical SAM core domain. [4Fe-4S] cluster-binding residues include cysteine 31, cysteine 46, and cysteine 49. Position 48-50 (48-50 (FCD)) interacts with S-adenosyl-L-methionine. Threonine 51 contacts Mg(2+). Position 90 (threonine 90) interacts with substrate. S-adenosyl-L-methionine contacts are provided by residues glycine 92, 133–135 (SPK), and 173–176 (QPMD). Proline 210 contributes to the substrate binding site.

The protein belongs to the radical SAM superfamily. 7-carboxy-7-deazaguanine synthase family. As to quaternary structure, homodimer. [4Fe-4S] cluster is required as a cofactor. It depends on S-adenosyl-L-methionine as a cofactor. Requires Mg(2+) as cofactor.

The catalysed reaction is 6-carboxy-5,6,7,8-tetrahydropterin + H(+) = 7-carboxy-7-deazaguanine + NH4(+). Its pathway is purine metabolism; 7-cyano-7-deazaguanine biosynthesis. Catalyzes the complex heterocyclic radical-mediated conversion of 6-carboxy-5,6,7,8-tetrahydropterin (CPH4) to 7-carboxy-7-deazaguanine (CDG), a step common to the biosynthetic pathways of all 7-deazapurine-containing compounds. This is 7-carboxy-7-deazaguanine synthase from Burkholderia multivorans (strain ATCC 17616 / 249).